A 376-amino-acid polypeptide reads, in one-letter code: Dihydroorotate dehydrogenase (quinone) (376 aa).

Residues 74–78 and Thr98 contribute to the FMN site; that span reads AGFDK. Substrate is bound at residue Lys78. Position 123–127 (123–127) interacts with substrate; sequence NRMGF. FMN-binding residues include Asn155 and Asn188. Residue Asn188 participates in substrate binding. Ser191 acts as the Nucleophile in catalysis. Residue Asn193 participates in substrate binding. FMN is bound by residues Lys226 and Thr254. 255–256 lines the substrate pocket; the sequence is NT. FMN-binding positions include Gly284, Gly313, and 334-335; that span reads YT.

It belongs to the dihydroorotate dehydrogenase family. Type 2 subfamily. In terms of assembly, monomer. It depends on FMN as a cofactor.

It localises to the cell membrane. It carries out the reaction (S)-dihydroorotate + a quinone = orotate + a quinol. Its pathway is pyrimidine metabolism; UMP biosynthesis via de novo pathway; orotate from (S)-dihydroorotate (quinone route): step 1/1. Its function is as follows. Catalyzes the conversion of dihydroorotate to orotate with quinone as electron acceptor. The protein is Dihydroorotate dehydrogenase (quinone) of Nostoc punctiforme (strain ATCC 29133 / PCC 73102).